The chain runs to 216 residues: Ribosomal RNA large subunit methyltransferase E (216 aa).

Residues Gly-67, Trp-69, Asp-87, Asp-103, and Asp-128 each coordinate S-adenosyl-L-methionine. The Proton acceptor role is filled by Lys-168.

It belongs to the class I-like SAM-binding methyltransferase superfamily. RNA methyltransferase RlmE family.

The protein localises to the cytoplasm. It carries out the reaction uridine(2552) in 23S rRNA + S-adenosyl-L-methionine = 2'-O-methyluridine(2552) in 23S rRNA + S-adenosyl-L-homocysteine + H(+). In terms of biological role, specifically methylates the uridine in position 2552 of 23S rRNA at the 2'-O position of the ribose in the fully assembled 50S ribosomal subunit. In Acinetobacter baylyi (strain ATCC 33305 / BD413 / ADP1), this protein is Ribosomal RNA large subunit methyltransferase E.